We begin with the raw amino-acid sequence, 109 residues long: Nucleoid-associated protein Cvib_1034 (109 aa).

This sequence belongs to the YbaB/EbfC family. As to quaternary structure, homodimer.

Its subcellular location is the cytoplasm. The protein localises to the nucleoid. Functionally, binds to DNA and alters its conformation. May be involved in regulation of gene expression, nucleoid organization and DNA protection. The protein is Nucleoid-associated protein Cvib_1034 of Chlorobium phaeovibrioides (strain DSM 265 / 1930) (Prosthecochloris vibrioformis (strain DSM 265)).